The chain runs to 809 residues: Interleukin-4 receptor subunit alpha (809 aa).

A signal peptide spans 1 to 25 (MGCLCPGLTLPVSCLILVWAAGSGS). At 26–231 (VKVLRLTACF…NYYEQPLEQR (206 aa)) the chain is on the extracellular side. Cys-34 and Cys-44 form a disulfide bridge. Residues Asn-53 and Asn-71 are each glycosylated (N-linked (GlcNAc...) asparagine). A disulfide bridge links Cys-74 with Cys-86. 3 N-linked (GlcNAc...) asparagine glycosylation sites follow: Asn-112, Asn-128, and Asn-161. Residues 125–222 (APQNLTVHAI…EWSPSTTWHN (98 aa)) form the Fibronectin type-III domain. Ser-163 carries the phosphoserine modification. N-linked (GlcNAc...) asparagine glycans are attached at residues Asn-175 and Asn-208. Residues 211–215 (WSEWS) carry the WSXWS motif motif. A helical membrane pass occupies residues 232–255 (LPLGVSISCVVILAICLSCYFSII). Residues 256-809 (KIKKEWWDQI…STGPTCTSAS (554 aa)) are Cytoplasmic-facing. Positions 261–269 (WWDQIPNPA) match the Box 1 motif motif. Disordered stretches follow at residues 369 to 397 (ESEE…QEGR) and 441 to 468 (SAGP…TLTQ). Polar residues predominate over residues 447-468 (AASQGEEQPLNPESNPLATLTQ). Tyr-488 carries the phosphotyrosine modification. A disordered region spans residues 514-536 (LGQVDPSIPSAPQPSEPPTALQP). 3 positions are modified to phosphotyrosine: Tyr-566, Tyr-590, and Tyr-618. Residues 606 to 674 (QSGVEASSGE…EPTVKGEDPR (69 aa)) form a disordered region. The short motif at 695–700 (IVYSAL) is the ITIM motif element.

The protein belongs to the type I cytokine receptor family. Type 4 subfamily. The functional IL4 receptor is formed by initial binding of IL4 to IL4R. Subsequent recruitment to the complex of the common gamma chain, in immune cells, creates a type I receptor and, in non-immune cells, of IL13RA1 forms a type II receptor. IL4R can also interact with the IL13/IL13RA1 complex to form a similar type II receptor. Interacts with PIK3C3. Interacts with the SH2-containing phosphatases, PTPN6/SHIP1, PTPN11/SHIP2 and INPP5D/SHIP. Interacts with JAK1 through a Box 1-containing region; inhibited by SOCS5. Interacts with SOCS5; inhibits IL4 signaling. Interacts with JAK3. Interacts with CLM1. Interacts with IL13RA2. On IL4 binding, phosphorylated on tyrosine residues in the cytoplasmic domain.

It is found in the cell membrane. The protein resides in the secreted. In terms of biological role, receptor for both interleukin 4 and interleukin 13. Couples to the JAK1/2/3-STAT6 pathway. The IL4 response is involved in promoting Th2 differentiation. The IL4/IL13 responses are involved in regulating IgE production and, chemokine and mucus production at sites of allergic inflammation. In certain cell types, can signal through activation of insulin receptor substrates, IRS1/IRS2. This is Interleukin-4 receptor subunit alpha (IL4R) from Equus caballus (Horse).